Consider the following 297-residue polypeptide: 33 kDa chaperonin (297 aa).

Disulfide bonds link Cys-233-Cys-235 and Cys-267-Cys-270.

This sequence belongs to the HSP33 family. In terms of processing, under oxidizing conditions two disulfide bonds are formed involving the reactive cysteines. Under reducing conditions zinc is bound to the reactive cysteines and the protein is inactive.

It localises to the cytoplasm. In terms of biological role, redox regulated molecular chaperone. Protects both thermally unfolding and oxidatively damaged proteins from irreversible aggregation. Plays an important role in the bacterial defense system toward oxidative stress. This Haemophilus ducreyi (strain 35000HP / ATCC 700724) protein is 33 kDa chaperonin.